A 338-amino-acid chain; its full sequence is Protein RecA (338 aa).

ATP is bound at residue 68–75 (GPESSGKT).

This sequence belongs to the RecA family.

Its subcellular location is the cytoplasm. Can catalyze the hydrolysis of ATP in the presence of single-stranded DNA, the ATP-dependent uptake of single-stranded DNA by duplex DNA, and the ATP-dependent hybridization of homologous single-stranded DNAs. It interacts with LexA causing its activation and leading to its autocatalytic cleavage. The protein is Protein RecA of Citrifermentans bemidjiense (strain ATCC BAA-1014 / DSM 16622 / JCM 12645 / Bem) (Geobacter bemidjiensis).